Reading from the N-terminus, the 609-residue chain is Dihydroxy-acid dehydratase (609 aa).

Asp81 is a binding site for Mg(2+). [2Fe-2S] cluster is bound at residue Cys122. Mg(2+) contacts are provided by Asp123 and Lys124. Lys124 carries the post-translational modification N6-carboxylysine. Position 195 (Cys195) interacts with [2Fe-2S] cluster. Position 491 (Glu491) interacts with Mg(2+). Ser517 functions as the Proton acceptor in the catalytic mechanism.

The protein belongs to the IlvD/Edd family. Homodimer. Requires [2Fe-2S] cluster as cofactor. It depends on Mg(2+) as a cofactor.

The enzyme catalyses (2R)-2,3-dihydroxy-3-methylbutanoate = 3-methyl-2-oxobutanoate + H2O. The catalysed reaction is (2R,3R)-2,3-dihydroxy-3-methylpentanoate = (S)-3-methyl-2-oxopentanoate + H2O. The protein operates within amino-acid biosynthesis; L-isoleucine biosynthesis; L-isoleucine from 2-oxobutanoate: step 3/4. It participates in amino-acid biosynthesis; L-valine biosynthesis; L-valine from pyruvate: step 3/4. Functionally, functions in the biosynthesis of branched-chain amino acids. Catalyzes the dehydration of (2R,3R)-2,3-dihydroxy-3-methylpentanoate (2,3-dihydroxy-3-methylvalerate) into 2-oxo-3-methylpentanoate (2-oxo-3-methylvalerate) and of (2R)-2,3-dihydroxy-3-methylbutanoate (2,3-dihydroxyisovalerate) into 2-oxo-3-methylbutanoate (2-oxoisovalerate), the penultimate precursor to L-isoleucine and L-valine, respectively. The polypeptide is Dihydroxy-acid dehydratase (Acinetobacter baumannii (strain AB307-0294)).